The chain runs to 67 residues: Large ribosomal subunit protein uL29 (67 aa).

This sequence belongs to the universal ribosomal protein uL29 family.

The sequence is that of Large ribosomal subunit protein uL29 (rpmC) from Thermus thermophilus.